Here is a 497-residue protein sequence, read N- to C-terminus: Galactose-1-phosphate uridylyltransferase (497 aa).

Belongs to the galactose-1-phosphate uridylyltransferase type 2 family.

The protein localises to the cytoplasm. It catalyses the reaction alpha-D-galactose 1-phosphate + UDP-alpha-D-glucose = alpha-D-glucose 1-phosphate + UDP-alpha-D-galactose. Its pathway is carbohydrate metabolism; galactose metabolism. The protein is Galactose-1-phosphate uridylyltransferase of Enterococcus faecalis (strain ATCC 700802 / V583).